We begin with the raw amino-acid sequence, 456 residues long: Phosphomethylpyrimidine synthase (456 aa).

Residues Asn-80, Met-109, Tyr-139, His-175, 195–197, 236–239, and Glu-275 contribute to the substrate site; these read SRG and DSLR. His-279 lines the Zn(2+) pocket. A substrate-binding site is contributed by Tyr-302. His-343 contacts Zn(2+). Cys-423, Cys-426, and Cys-431 together coordinate [4Fe-4S] cluster.

The protein belongs to the ThiC family. Requires [4Fe-4S] cluster as cofactor.

It catalyses the reaction 5-amino-1-(5-phospho-beta-D-ribosyl)imidazole + S-adenosyl-L-methionine = 4-amino-2-methyl-5-(phosphooxymethyl)pyrimidine + CO + 5'-deoxyadenosine + formate + L-methionine + 3 H(+). It functions in the pathway cofactor biosynthesis; thiamine diphosphate biosynthesis. Catalyzes the synthesis of the hydroxymethylpyrimidine phosphate (HMP-P) moiety of thiamine from aminoimidazole ribotide (AIR) in a radical S-adenosyl-L-methionine (SAM)-dependent reaction. The protein is Phosphomethylpyrimidine synthase of Prochlorococcus marinus (strain MIT 9301).